Reading from the N-terminus, the 985-residue chain is SWI/SNF complex subunit SWI3D (985 aa).

The interval 1–55 (MEEKRRDSAGTLAFAGSSGDSPASEPMPAPRRRGGGLKRKANALGGSNFFSSAPS) is disordered. Positions 30 to 41 (PRRRGGGLKRKA) are enriched in basic residues. Residues 108–133 (EKPKEEEERNKAIREWEALEAKIEAD) adopt a coiled-coil conformation. The SWIRM domain maps to 145-242 (HVVPNHCGWF…FHPFPPTDTG (98 aa)). Residues 305–359 (AVEYHCNSCSADCSRKRYHCPKQADFDLCTECFNSGKFSSDMSSSDFILMEPAEA) form a ZZ-type; degenerate zinc finger. Zn(2+) contacts are provided by Cys-310, Cys-313, Cys-333, and Cys-336. The SANT domain occupies 362–413 (VGSGKWTDQETLLLLEALEIFKENWNEIAEHVATKTKAQCMLHFLQMPIEDA). 3 stretches are compositionally biased toward basic and acidic residues: residues 428–464 (TTDLAVSKDDNSVLKDAPEEAENKKRVDEDETMKEVP), 493–502 (AEQKTPKLET), and 615–661 (DNSH…EKQP). 2 disordered regions span residues 428 to 502 (TTDL…KLET) and 591 to 814 (EDPP…EGKK). The span at 662-671 (GSRTENSTTK) shows a compositional bias: polar residues. Basic and acidic residues predominate over residues 703-724 (CSGKELQEPLKDGNKLSSENKD). The span at 725–736 (ASQSTVSQSAAD) shows a compositional bias: polar residues. Residues 742–776 (ASRDVEMKDTLQSEKDPEDVVKTVGEKVQLAKEEG) are compositionally biased toward basic and acidic residues. The segment covering 780–800 (VLSTPDKSVSQQPIGSASAPE) has biased composition (polar residues). Positions 839 to 900 (ISAAAVKAKN…EQLERSRQRL (62 aa)) form a coiled coil. The tract at residues 944-985 (MAFPRPPMPRPPGFPVPGSFVAATTMTGSSDPSPGSDNVSSV) is disordered. Over residues 947–958 (PRPPMPRPPGFP) the composition is skewed to pro residues. Polar residues predominate over residues 965 to 985 (AATTMTGSSDPSPGSDNVSSV).

Interacts with SWI3B, but not with BSH. Component of a RNA-directed DNA methylation (RdDM) complex that contains at least MORC6, MORC1/CRT1, MORC2, SWI3D and SUVH9. Interacts with MORC6 and SUVH9. Ubiquitously expressed.

The protein resides in the nucleus. Its function is as follows. Component of a multiprotein complex equivalent of the SWI/SNF complex, an ATP-dependent chromatin-remodeling complex, which is required for the positive and negative regulation of gene expression of a large number of genes. It changes chromatin structure by altering DNA-histone contacts within a nucleosome, leading eventually to a change in nucleosome position, thus facilitating or repressing binding of gene-specific transcription factors. This Arabidopsis thaliana (Mouse-ear cress) protein is SWI/SNF complex subunit SWI3D (SWI3D).